A 101-amino-acid polypeptide reads, in one-letter code: Large ribosomal subunit protein uL23 (101 aa).

Belongs to the universal ribosomal protein uL23 family. In terms of assembly, part of the 50S ribosomal subunit. Contacts protein L29, and trigger factor when it is bound to the ribosome.

Functionally, one of the early assembly proteins it binds 23S rRNA. One of the proteins that surrounds the polypeptide exit tunnel on the outside of the ribosome. Forms the main docking site for trigger factor binding to the ribosome. This chain is Large ribosomal subunit protein uL23, found in Trichodesmium erythraeum (strain IMS101).